Reading from the N-terminus, the 600-residue chain is MVNNMTDLTAQEPAWQTRDHLDDPVIGELRNRFGPDAFTVQATRTGVPVVWIKREQLLEVGDFLKKLPKPYVMLFDLHGMDERLRTHREGLPAADFSVFYHLISIDRNRDIMLKVALAENDLHVPTFTKLFPNANWYERETWDLFGITFDGHPNLRRIMMPQTWKGHPLRKDYPARATEFSPFELTKAKQDLEMEALTFKPEEWGMKRGTENEDFMFLNLGPNHPSAHGAFRIVLQLDGEEIVDCVPDIGYHHRGAEKMGERQSWHSYIPYTDRIEYLGGCVNEMPYVLAVEKLAGITVPDRVNVIRVMLSELFRINSHLLYISTFIQDVGAMTPVFFAFTDRQKIYDLVEAITGFRMHPAWFRIGGVAHDLPRGWDRLLREFLDWMPKRLASYEKAALQNTILKGRSQGVAAYGAKEALEWGTTGAGLRATGIDFDVRKARPYSGYENFDFEIPVGGGVSDCYTRVMLKVEELRQSLRILEQCLNNMPEGPFKADHPLTTPPPKERTLQHIETLITHFLQVSWGPVMPANESFQMIEATKGINSYYLTSDGSTMSYRTRVRTPSFAHLQQIPAAIRGSLVSDLIVYLGSIDFVMSDVDR.

Residues 1-190 (MVNNMTDLTA…SPFELTKAKQ (190 aa)) are NADH dehydrogenase I subunit C. Residues 214-600 (DFMFLNLGPN…IDFVMSDVDR (387 aa)) are NADH dehydrogenase I subunit D.

The protein in the N-terminal section; belongs to the complex I 30 kDa subunit family. In the C-terminal section; belongs to the complex I 49 kDa subunit family. In terms of assembly, NDH-1 is composed of 13 different subunits. Subunits NuoB, CD, E, F, and G constitute the peripheral sector of the complex.

It is found in the cell inner membrane. The enzyme catalyses a quinone + NADH + 5 H(+)(in) = a quinol + NAD(+) + 4 H(+)(out). NDH-1 shuttles electrons from NADH, via FMN and iron-sulfur (Fe-S) centers, to quinones in the respiratory chain. The immediate electron acceptor for the enzyme in this species is believed to be ubiquinone. Couples the redox reaction to proton translocation (for every two electrons transferred, four hydrogen ions are translocated across the cytoplasmic membrane), and thus conserves the redox energy in a proton gradient. The polypeptide is NADH-quinone oxidoreductase subunit C/D (Escherichia coli (strain K12 / DH10B)).